A 310-amino-acid chain; its full sequence is GMP synthase [glutamine-hydrolyzing] subunit B (310 aa).

The GMPS ATP-PPase domain occupies Phe-2 to Arg-185. An ATP-binding site is contributed by Ser-29–Ser-35.

As to quaternary structure, heterodimer composed of a glutamine amidotransferase subunit (A) and a GMP-binding subunit (B).

It catalyses the reaction XMP + L-glutamine + ATP + H2O = GMP + L-glutamate + AMP + diphosphate + 2 H(+). Its pathway is purine metabolism; GMP biosynthesis; GMP from XMP (L-Gln route): step 1/1. Catalyzes the synthesis of GMP from XMP. This is GMP synthase [glutamine-hydrolyzing] subunit B from Methanococcus maripaludis (strain C7 / ATCC BAA-1331).